Consider the following 86-residue polypeptide: Small ribosomal subunit protein bS20 (86 aa).

This sequence belongs to the bacterial ribosomal protein bS20 family.

In terms of biological role, binds directly to 16S ribosomal RNA. The chain is Small ribosomal subunit protein bS20 from Pseudarthrobacter chlorophenolicus (strain ATCC 700700 / DSM 12829 / CIP 107037 / JCM 12360 / KCTC 9906 / NCIMB 13794 / A6) (Arthrobacter chlorophenolicus).